Reading from the N-terminus, the 335-residue chain is MNLINEKLNNLENNAAKSPKEAVVLLNMGGPNSLYEVGVFLKNMFDDPFILTIKNNFMRKMVGKMIVNSRIEKSKKIYEKLGGKSPLTPITFALTERLNELDPSRFYTYAMRYTPPYASMVLQDLALKEVESLVFFSMYPQYSSTTTLSSFNDAFNALKSLETFRPKVRVIERFYADKKLNEIILNTILSALNNRKSQDFVLIFSVHGLPKSIVDAGDTYQQECEHHVSLLKELMQQKNIPFKEVLLSYQSKLGPMKWLEPSTEELIEKHRKSHVIIYPLAFTIDNSETLYELDMQYRLMAERLAIKEYLVCPCLNDSIEFAKFIIGLVENLKSE.

The Fe cation site is built by His-207 and Glu-288.

Belongs to the ferrochelatase family.

Its subcellular location is the cytoplasm. The enzyme catalyses heme b + 2 H(+) = protoporphyrin IX + Fe(2+). It participates in porphyrin-containing compound metabolism; protoheme biosynthesis; protoheme from protoporphyrin-IX: step 1/1. Its function is as follows. Catalyzes the ferrous insertion into protoporphyrin IX. This Helicobacter pylori (strain G27) protein is Ferrochelatase.